The following is a 150-amino-acid chain: SsrA-binding protein (150 aa).

Belongs to the SmpB family.

The protein localises to the cytoplasm. In terms of biological role, required for rescue of stalled ribosomes mediated by trans-translation. Binds to transfer-messenger RNA (tmRNA), required for stable association of tmRNA with ribosomes. tmRNA and SmpB together mimic tRNA shape, replacing the anticodon stem-loop with SmpB. tmRNA is encoded by the ssrA gene; the 2 termini fold to resemble tRNA(Ala) and it encodes a 'tag peptide', a short internal open reading frame. During trans-translation Ala-aminoacylated tmRNA acts like a tRNA, entering the A-site of stalled ribosomes, displacing the stalled mRNA. The ribosome then switches to translate the ORF on the tmRNA; the nascent peptide is terminated with the 'tag peptide' encoded by the tmRNA and targeted for degradation. The ribosome is freed to recommence translation, which seems to be the essential function of trans-translation. In Borreliella burgdorferi (strain ATCC 35210 / DSM 4680 / CIP 102532 / B31) (Borrelia burgdorferi), this protein is SsrA-binding protein.